The following is a 42-amino-acid chain: Tachystatin-B2 (42 aa).

Disulfide bonds link Cys4/Cys20, Cys11/Cys25, and Cys19/Cys37.

Granular hemocytes, small secretory granules.

It is found in the secreted. Its function is as follows. Exhibits stronger antimicrobial activity against the Gram-positive bacteria (S.aureus (IC(50) is 7.4 ug/ml)) and fungi (C.albicans (IC(50) is 3.0 ug/ml) and P.pastoris (IC(50) is 0.1 ug/ml)) than Gram-negative bacteria (E.coli no inhibition at 100 ug/ml). Binds to chitin (4.3 uM are required to obtain 50% of binding). Does not cause hemolysis on sheep erythrocytes. Has no blocking activity on the P-type calcium channel. This Tachypleus tridentatus (Japanese horseshoe crab) protein is Tachystatin-B2.